We begin with the raw amino-acid sequence, 800 residues long: Mitochondrial intermediate peptidase (800 aa).

Residues Met1–Leu23 constitute a mitochondrion transit peptide. Residues Arg27–Asp41 are compositionally biased toward polar residues. A disordered region spans residues Arg27–Glu59. His563 serves as a coordination point for Zn(2+). Glu564 is a catalytic residue. Zn(2+)-binding residues include His567 and His570.

Belongs to the peptidase M3 family. The cofactor is Zn(2+).

Its subcellular location is the mitochondrion matrix. The catalysed reaction is Release of an N-terminal octapeptide as second stage of processing of some proteins imported into the mitochondrion.. In terms of biological role, cleaves proteins, imported into the mitochondrion, to their mature size. While most mitochondrial precursor proteins are processed to the mature form in one step by mitochondrial processing peptidase (MPP), the sequential cleavage by MIP of an octapeptide after initial processing by MPP is a required step for a subgroup of nuclear-encoded precursor proteins destined for the matrix or the inner membrane. The protein is Mitochondrial intermediate peptidase (oct1) of Aspergillus oryzae (strain ATCC 42149 / RIB 40) (Yellow koji mold).